The chain runs to 120 residues: Flagellar protein FliT (120 aa).

Residues 1-50 form a required for homodimerization region; that stretch reads MERHQHLLSEYQQILTLSEQMLMLATVENWDALVDLEMAYLKAVENTANI. The fliD binding stretch occupies residues 60 to 98; that stretch reads LQELLRQKLRSILENEIEIKRLLQRRLDKLSELVGQSTR.

Belongs to the FliT family. In terms of assembly, homodimer. Interacts with FliD and FlhC.

It localises to the cytoplasm. It is found in the cytosol. Its function is as follows. Dual-function protein that regulates the transcription of class 2 flagellar operons and that also acts as an export chaperone for the filament-capping protein FliD. As a transcriptional regulator, acts as an anti-FlhDC factor; it directly binds FlhC, thus inhibiting the binding of the FlhC/FlhD complex to class 2 promoters, resulting in decreased expression of class 2 flagellar operons. As a chaperone, effects FliD transition to the membrane by preventing its premature polymerization, and by directing it to the export apparatus. The chain is Flagellar protein FliT from Yersinia pseudotuberculosis serotype IB (strain PB1/+).